A 214-amino-acid chain; its full sequence is MTHITGTLYIISAPSGAGKTSLVKALMDAQQEPQHGAQAKIRVSVSHTTRAMRPGEVDGVNYNFVDRATFLSMIEHGDFLEQAEVFGNLYGTSQSHLQQTLDEGHDLILEIDWQGARQVRAQMPQARSIFILPPTQQALRQRLTNRGQDSDEIIEARMREAVSEMSHYSEYEYVVVNDDFAGALEDLKAIFRANRLTQQHQQEQYSELFQELLA.

The 187-residue stretch at 6–192 folds into the Guanylate kinase-like domain; the sequence is GTLYIISAPS…ALEDLKAIFR (187 aa). 13 to 20 lines the ATP pocket; sequence APSGAGKT.

Belongs to the guanylate kinase family.

It is found in the cytoplasm. The enzyme catalyses GMP + ATP = GDP + ADP. Essential for recycling GMP and indirectly, cGMP. The chain is Guanylate kinase from Pseudomonas syringae pv. syringae (strain B728a).